The primary structure comprises 311 residues: Ribonuclease HIII (311 aa).

One can recognise an RNase H type-2 domain in the interval 93-310; that stretch reads LSAIGSDEVG…TKKALDIAKH (218 aa). The a divalent metal cation site is built by D99, E100, and D204.

This sequence belongs to the RNase HII family. RnhC subfamily. Requires Mn(2+) as cofactor. The cofactor is Mg(2+).

Its subcellular location is the cytoplasm. The enzyme catalyses Endonucleolytic cleavage to 5'-phosphomonoester.. Endonuclease that specifically degrades the RNA of RNA-DNA hybrids. This chain is Ribonuclease HIII, found in Geobacillus kaustophilus (strain HTA426).